Reading from the N-terminus, the 465-residue chain is Gamma-aminobutyric acid receptor subunit rho-2 (465 aa).

The first 20 residues, 1 to 20 (MPYFTRLILFLFCLMVLVES), serve as a signal peptide directing secretion. Residues 21-260 (RKPKRKRWTG…LYINFTLRRH (240 aa)) are Extracellular-facing. Position 105 (R105) interacts with 4-aminobutanoate. N-linked (GlcNAc...) asparagine glycosylation is present at N120. Residue S169 participates in 4-aminobutanoate binding. C178 and C192 are disulfide-bonded. E197 is a 4-aminobutanoate binding site. N-linked (GlcNAc...) asparagine glycosylation occurs at N254. The helical transmembrane segment at 261–281 (IFFFLLQTYFPATLMVMLSWV) threads the bilayer. Residues 282–293 (SFWIDRRAVPAR) lie on the Cytoplasmic side of the membrane. The chain crosses the membrane as a helical span at residues 294-314 (VSLGITTVLTMTTIITGVNAS). Over 315–325 (MPRVSYVKAVD) the chain is Extracellular. Residues 326-346 (IYLWVSFVFVFLSVLEYAAVN) form a helical membrane-spanning segment. Topologically, residues 347 to 443 (YLTTVQERKE…IFQNTHAIDK (97 aa)) are cytoplasmic. The chain crosses the membrane as a helical span at residues 444 to 464 (YSRLIFPASYIFFNLIYWSVF). A topological domain (extracellular) is located at residue S465.

This sequence belongs to the ligand-gated ion channel (TC 1.A.9) family. Gamma-aminobutyric acid receptor (TC 1.A.9.5) subfamily. GABRR2 sub-subfamily. In terms of assembly, three rho subunits (rho-1/GBRR1, rho-2/GBRR2 and rho-3/GBRR3) coassemble either to form functional homopentamers or heteropentamers. Rho-2 is unable to form a functional homopentamer. Interacts with SQSTM1.

Its subcellular location is the postsynaptic cell membrane. The protein localises to the cell membrane. It carries out the reaction chloride(in) = chloride(out). Rho subunit of the pentameric ligand-gated chloride channels responsible for mediating the effects of gamma-aminobutyric acid (GABA), the major inhibitory neurotransmitter in the brain. Rho-containing GABA-gated chloride channels are a subclass of GABA(A) receptors (GABAARs) entirely composed of rho subunits, where GABA molecules bind at the rho intersubunit interfaces. When activated by GABA, rho-GABAARs selectively allow the flow of chloride anions across the cell membrane down their electrochemical gradient. Rho-2 GABAARs may contribute to the regulation of glial development in the cerebellum by controlling extrasynaptic transmission. Rho-2 GABAARs are also involved in neuronal tonic (extrasynaptic) and phasic (synaptic) transmission in the Purkinje neurons of the cerebellum. Rho-2 GABAARs expressed in retina may play a role in retinal neurotransmission. The chain is Gamma-aminobutyric acid receptor subunit rho-2 from Homo sapiens (Human).